We begin with the raw amino-acid sequence, 385 residues long: MKKYTLIATAPMGIEAVVAKEVRDLGYECKVDNGKVIFEGDALAICRANLWLRTADRIKVQVASFKAKTFDELFEKTKAINWRSFIPENGKFPVIGKSVKSTLASVPDCQRIVKKAIVEKLKLQSGKANDWIEETGAEYKVEISLLKDQALITLDSSGTGLHKRGYRVDQGGAPIKETLAAALVQLTNWTPDRPFVDPFCGSGTIAIEAALIGQNIAPGFNRDFVSEDWEWIGKDLWNKARLEVEEKANYDQPLTIFASDIDHRMVQIAKENAEEAGLGDLIQFKQMQVKDFTTNLEFGVIVGNPPYGERLGEKKAVEQMYKEMGQAFEPLDTWSVYMLTSNENFEEAYGRKATKKRKLFNGFIKTDYYQYWSKVRPQRKKTENA.

The 113-residue stretch at 44–156 folds into the THUMP domain; it reads AICRANLWLR…KDQALITLDS (113 aa).

Belongs to the methyltransferase superfamily. As to quaternary structure, interacts with the RNA polymerase core.

This is Putative RNA methyltransferase YpsC (ypsC) from Bacillus subtilis (strain 168).